The following is a 403-amino-acid chain: GDSL esterase/lipase At1g28590 (403 aa).

Residues 1 to 27 (MASLDSLPAMKLVRFILSTLLVTSVNS) form the signal peptide. Ser43 (nucleophile) is an active-site residue. N-linked (GlcNAc...) asparagine glycosylation is found at Asn139 and Asn323. Residues Asp346 and His349 contribute to the active site.

The protein belongs to the 'GDSL' lipolytic enzyme family.

The protein localises to the secreted. This chain is GDSL esterase/lipase At1g28590, found in Arabidopsis thaliana (Mouse-ear cress).